Here is a 429-residue protein sequence, read N- to C-terminus: MGCGASVPVDDDEIDPFLQDKRINDAIEQSLQLRQQNSKKGVKLLLLGAGESGKSTVLKQLKLLHKGGFTQQERRQYSHVIWCDVIQSMKVLIIQARKLKIKLDCDQPNNSLIPYKQIILRSDPLKQIDADVAGGTDFLNDFVVKYSEENKNKRRLKSTGTTDIWGKDDDSNINSDAINQALESSLNKDSEQFTRLSIAEAIHKLWKLDSGIKKCFDRSNEFQLEGSADYYFDNVFNFADTNYLSTDLDILKGRIKTTGITETDFLIKSFQFKVLDAGGQRSERKKWIHCFEDITAVLFVLAISEYDQNLFEDERVNRMHESIVLFDSLCNSKWFANTPFILFLNKIDIFENKIKKNPLKNYFPDYDGKPDDTNEAIKFFETNFLKINQTNKPIYVHRTCATDSKSMKFVLSAVTDMIVQQNLKKSGIM.

Gly-2 carries the N-myristoyl glycine lipid modification. The S-palmitoyl cysteine moiety is linked to residue Cys-3. In terms of domain architecture, G-alpha spans 40–429; it reads KGVKLLLLGA…QQNLKKSGIM (390 aa). Residues 43 to 56 form a G1 motif region; that stretch reads KLLLLGAGESGKST. GTP-binding residues include Glu-51, Ser-52, Gly-53, Lys-54, Ser-55, and Thr-56. Ser-55 is a Mg(2+) binding site. The tract at residues 125-197 is not present in other G-proteins; it reads LKQIDADVAG…KDSEQFTRLS (73 aa). A G2 motif region spans residues 249–257; that stretch reads DILKGRIKT. GTP is bound by residues Leu-251, Thr-257, Gly-279, Asn-345, Lys-346, Asp-348, and Ala-401. Mg(2+) is bound at residue Thr-257. Residues 272-281 form a G3 motif region; that stretch reads FKVLDAGGQR. The G4 motif stretch occupies residues 341-348; it reads ILFLNKID. The segment at 399-404 is G5 motif; the sequence is TCATDS.

This sequence belongs to the G-alpha family. G(q) subfamily. In terms of assembly, g proteins are composed of 3 units; alpha, beta and gamma. The alpha chain contains the guanine nucleotide binding site. Mg(2+) serves as cofactor.

Functionally, guanine nucleotide-binding proteins (G proteins) are involved as modulators or transducers in various transmembrane signaling systems. Involved in the mating pathway. The sequence is that of Guanine nucleotide-binding protein subunit alpha (CAG1) from Candida albicans (strain WO-1) (Yeast).